Consider the following 216-residue polypeptide: uncharacterized protein (216 aa).

This is an uncharacterized protein from Escherichia coli (strain K12).